The following is an 806-amino-acid chain: ATP-dependent zinc metalloprotease FTSH 9, chloroplastic (806 aa).

A chloroplast-targeting transit peptide spans 1–62; the sequence is MTSIELLSPL…SSIQLPQSVP (62 aa). The tract at residues 84-116 is disordered; the sequence is SSRTIVNCQEGDQKASSSEGEGKTNKDKGRKQG. 2 helical membrane-spanning segments follow: residues 133-153 and 271-291; these read IIQAQEIGVMLLQLGIVMFVV and GGFFNSGLIVLFYIAVLAGLL. An ATP-binding site is contributed by 369–376; it reads GLPGTGKT. Histidine 594 contacts Zn(2+). Glutamate 595 is an active-site residue. 2 residues coordinate Zn(2+): histidine 598 and aspartate 677.

The protein in the N-terminal section; belongs to the AAA ATPase family. It in the C-terminal section; belongs to the peptidase M41 family. Zn(2+) serves as cofactor.

Its subcellular location is the plastid. The protein localises to the chloroplast thylakoid membrane. In terms of biological role, probable ATP-dependent zinc metallopeptidase. The polypeptide is ATP-dependent zinc metalloprotease FTSH 9, chloroplastic (FTSH9) (Arabidopsis thaliana (Mouse-ear cress)).